A 205-amino-acid chain; its full sequence is Putative 3-methyladenine DNA glycosylase (205 aa).

The protein belongs to the DNA glycosylase MPG family.

This Bacillus cereus (strain ATCC 10987 / NRS 248) protein is Putative 3-methyladenine DNA glycosylase.